We begin with the raw amino-acid sequence, 252 residues long: Phosphate import ATP-binding protein PstB (252 aa).

An ABC transporter domain is found at 6–247 (ITINNLNFYY…PRDKRTEDYI (242 aa)). 38–45 (GPSGCGKS) is a binding site for ATP.

This sequence belongs to the ABC transporter superfamily. Phosphate importer (TC 3.A.1.7) family. As to quaternary structure, the complex is composed of two ATP-binding proteins (PstB), two transmembrane proteins (PstC and PstA) and a solute-binding protein (PstS).

Its subcellular location is the cell membrane. The catalysed reaction is phosphate(out) + ATP + H2O = ADP + 2 phosphate(in) + H(+). In terms of biological role, part of the ABC transporter complex PstSACB involved in phosphate import. Responsible for energy coupling to the transport system. The polypeptide is Phosphate import ATP-binding protein PstB (Moorella thermoacetica (strain ATCC 39073 / JCM 9320)).